Reading from the N-terminus, the 356-residue chain is L-amino acid-D/L-Glu epimerase (356 aa).

Substrate-binding positions include Arg25, Ser136, and 161–163 (KVK). Residue Asp191 participates in Mg(2+) binding. Asn193 contacts substrate. Residues Glu219 and Asp244 each contribute to the Mg(2+) site. Substrate is bound by residues Lys268, 296-298 (CMM), and 320-322 (DLD).

This sequence belongs to the mandelate racemase/muconate lactonizing enzyme family. Mg(2+) serves as cofactor.

Catalyzes the epimerization of dipeptides with L-Glu in the second position. Has epimerase activity with L-Ala-L-Glu, L-Pro-L-Glu, L-Val-L-Glu, L-Thr-L-Glu and L-Met-L-Glu (in vitro). In Francisella philomiragia subsp. philomiragia (strain ATCC 25017 / CCUG 19701 / FSC 153 / O#319-036), this protein is L-amino acid-D/L-Glu epimerase.